Consider the following 334-residue polypeptide: MSNKIMKTSRLTAEDINGAWTIMPTPSTPDASDWRSTATVDLEETARIVEELIAAGVNGILSMGTFGECATLTWDEKRDYVSTIVETIRGRVPYFCGTTALNTREVIRQTRELIDIGANGTMLGVPMWVKMDLPTAVQFYRDVADAVPEAAIAIYANPEAFKFDFPRPFWAEMSKIPQVVTAKYLGIGMLDLDLRLAPNIRFLPHEDDYYAAARINPERITAFWSSGAMCGPATAIMLRDEVVRAKSTGDWAKAKAISDDMRAADSTLFPRGDFSEFSKYNIGLEKARMDAAGWLKAGPCRPPYNLVPEDYLAGAQKSGKAWAALHAKYSNELK.

The protein belongs to the DapA family.

It carries out the reaction (3E)-4-(2-hydroxyphenyl)-2-oxobut-3-enoate + H2O = salicylaldehyde + pyruvate. It participates in aromatic compound metabolism; naphthalene degradation. Involved in the naphthalene upper catabolic pathway. Catalyzes the transformation of trans-O-hydroxybenzylidenepyruvate (THBPA) to salicylaldehyde and pyruvate. The reaction is reversible. This chain is Trans-O-hydroxybenzylidenepyruvate hydratase-aldolase (pahE), found in Pseudomonas aeruginosa.